The following is a 254-amino-acid chain: UPF0246 protein FTF1693c (254 aa).

It belongs to the UPF0246 family.

This Francisella tularensis subsp. tularensis (strain FSC 198) protein is UPF0246 protein FTF1693c.